The primary structure comprises 276 residues: Nickel import system permease protein NikC (276 aa).

The next 5 helical transmembrane spans lie at 10–30, 73–93, 108–128, 186–206, and 238–258; these read LIFF…FFVS, LFVT…LGLF, FIDV…ASFF, IIPA…LYIS, and IMLI…NLTG. Residues 69–258 form the ABC transmembrane type-1 domain; it reads ARSTLFVTVL…ITILIFNLTG (190 aa).

Belongs to the binding-protein-dependent transport system permease family. OppBC subfamily. In terms of assembly, the complex is composed of two ATP-binding proteins (NikD and NikE), two transmembrane proteins (NikB and NikC) and a solute-binding protein (NikA).

The protein localises to the cell membrane. Functionally, part of the ABC transporter complex NikABCDE (Opp2) involved in nickel import. Probably responsible for the translocation of the substrate across the membrane. The chain is Nickel import system permease protein NikC from Staphylococcus aureus (strain bovine RF122 / ET3-1).